A 328-amino-acid chain; its full sequence is Methionyl-tRNA formyltransferase (328 aa).

Residue serine 110–proline 113 coordinates (6S)-5,6,7,8-tetrahydrofolate.

It belongs to the Fmt family.

The enzyme catalyses L-methionyl-tRNA(fMet) + (6R)-10-formyltetrahydrofolate = N-formyl-L-methionyl-tRNA(fMet) + (6S)-5,6,7,8-tetrahydrofolate + H(+). Attaches a formyl group to the free amino group of methionyl-tRNA(fMet). The formyl group appears to play a dual role in the initiator identity of N-formylmethionyl-tRNA by promoting its recognition by IF2 and preventing the misappropriation of this tRNA by the elongation apparatus. This is Methionyl-tRNA formyltransferase from Bifidobacterium longum (strain DJO10A).